Reading from the N-terminus, the 1330-residue chain is Nephrocystin-3 (1330 aa).

Residue glycine 2 is the site of N-myristoyl glycine attachment. Residues glutamate 83–valine 207 adopt a coiled-coil conformation. TPR repeat units follow at residues isoleucine 471–leucine 504, cysteine 885–methionine 918, threonine 920–leucine 942, alanine 943–alanine 976, alanine 985–alanine 1018, alanine 1027–alanine 1060, alanine 1093–valine 1126, alanine 1135–alanine 1168, alanine 1177–serine 1210, alanine 1219–serine 1252, and glycine 1261–glutamate 1294. The disordered stretch occupies residues serine 1296 to arginine 1330. Polar residues predominate over residues arginine 1305–arginine 1330.

In terms of assembly, interacts with NPHP1 and INVS/NPHP2. Interacts (when myristoylated) with UNC119 and UNC119B; interaction is required for localization to cilium. Interacts with CEP164. Component of a complex containing at least ANKS6, INVS, NEK8 and NPHP3. ANKS6 may organize complex assembly by linking INVS and NPHP3 to NEK8 and INVS may target the complex to the proximal ciliary axoneme. As to expression, widely expressed at low level. Expressed in heart, placenta, liver, skeletal muscle, kidney and pancreas. Expressed at very low level in brain and lung.

The protein resides in the cell projection. It is found in the cilium. In terms of biological role, required for normal ciliary development and function. Inhibits disheveled-1-induced canonical Wnt-signaling activity and may also play a role in the control of non-canonical Wnt signaling which regulates planar cell polarity. Probably acts as a molecular switch between different Wnt signaling pathways. Required for proper convergent extension cell movements. The polypeptide is Nephrocystin-3 (NPHP3) (Homo sapiens (Human)).